The sequence spans 227 residues: MADS-box transcription factor 25 (227 aa).

Positions 1–61 (MGRGKIAIKR…GRLYDFSSSS (61 aa)) constitute an MADS-box domain. Positions 86-176 (AKFWQREVTT…RKKFNIAHQR (91 aa)) constitute a K-box domain. Positions 183 to 227 (KLNSGESTSSEQVTRSSKDPGESSTPRDSRVCIDLELSQKEVEDE) are disordered. Positions 186 to 197 (SGESTSSEQVTR) are enriched in polar residues. The span at 198-227 (SSKDPGESSTPRDSRVCIDLELSQKEVEDE) shows a compositional bias: basic and acidic residues.

As to expression, expressed in seedling roots.

The protein resides in the nucleus. In terms of biological role, probable transcription factor. This is MADS-box transcription factor 25 (MADS25) from Oryza sativa subsp. japonica (Rice).